Reading from the N-terminus, the 135-residue chain is Mu-like prophage FluMu protein gp46 (135 aa).

To phage Mu protein gp46.

The protein is Mu-like prophage FluMu protein gp46 of Haemophilus influenzae (strain ATCC 51907 / DSM 11121 / KW20 / Rd).